The following is a 49-amino-acid chain: Large ribosomal subunit protein bL33B (49 aa).

The protein belongs to the bacterial ribosomal protein bL33 family.

This chain is Large ribosomal subunit protein bL33B, found in Geobacillus thermodenitrificans (strain NG80-2).